The sequence spans 347 residues: Ornithine transcarbamylase, mitochondrial (347 aa).

The N-terminal 25 residues, 1-25, are a transit peptide targeting the mitochondrion; it reads MINSISNTVLLKSVVSKRFFSSSAK. Carbamoyl phosphate-binding positions include 84-87, R135, H162, and Q165; that span reads STRT. L-ornithine contacts are provided by N194, D258, S262, and M263. C300 (proton acceptor) is an active-site residue. Residues 300–301 and R328 each bind carbamoyl phosphate; that span reads CL.

It belongs to the aspartate/ornithine carbamoyltransferase superfamily. OTCase family.

It is found in the mitochondrion matrix. It carries out the reaction carbamoyl phosphate + L-ornithine = L-citrulline + phosphate + H(+). It functions in the pathway amino-acid biosynthesis; L-arginine biosynthesis; L-arginine from L-ornithine and carbamoyl phosphate: step 1/3. This Pachysolen tannophilus (Yeast) protein is Ornithine transcarbamylase, mitochondrial (OTC).